Reading from the N-terminus, the 251-residue chain is Hydroxyacylglutathione hydrolase (251 aa).

Residues H53, H55, D57, H58, H110, D127, and H165 each contribute to the Zn(2+) site.

This sequence belongs to the metallo-beta-lactamase superfamily. Glyoxalase II family. As to quaternary structure, monomer. The cofactor is Zn(2+).

It catalyses the reaction an S-(2-hydroxyacyl)glutathione + H2O = a 2-hydroxy carboxylate + glutathione + H(+). Its pathway is secondary metabolite metabolism; methylglyoxal degradation; (R)-lactate from methylglyoxal: step 2/2. Thiolesterase that catalyzes the hydrolysis of S-D-lactoyl-glutathione to form glutathione and D-lactic acid. In Yersinia enterocolitica serotype O:8 / biotype 1B (strain NCTC 13174 / 8081), this protein is Hydroxyacylglutathione hydrolase.